The sequence spans 350 residues: tRNA-splicing endonuclease (350 aa).

Residues Y286, H297, and K328 contribute to the active site.

It belongs to the tRNA-intron endonuclease family. Archaeal long subfamily. In terms of assembly, homodimer.

The catalysed reaction is pretRNA = a 3'-half-tRNA molecule with a 5'-OH end + a 5'-half-tRNA molecule with a 2',3'-cyclic phosphate end + an intron with a 2',3'-cyclic phosphate and a 5'-hydroxyl terminus.. Functionally, endonuclease that removes tRNA introns. Cleaves pre-tRNA at the 5'- and 3'-splice sites to release the intron. The products are an intron and two tRNA half-molecules bearing 2',3' cyclic phosphate and 5'-OH termini. Recognizes a pseudosymmetric substrate in which 2 bulged loops of 3 bases are separated by a stem of 4 bp. This chain is tRNA-splicing endonuclease, found in Methanosarcina barkeri (strain Fusaro / DSM 804).